We begin with the raw amino-acid sequence, 455 residues long: tRNA modification GTPase MnmE (455 aa).

Arginine 24, glutamate 81, and lysine 121 together coordinate (6S)-5-formyl-5,6,7,8-tetrahydrofolate. In terms of domain architecture, TrmE-type G spans 217 to 378; sequence GMKVVIAGRP…LKEHLKDIMG (162 aa). Residue asparagine 227 participates in K(+) binding. GTP contacts are provided by residues 227–232, 246–252, 271–274, and 336–339; these read NAGKSS, TDIAGTT, DTAG, and NKAD. Position 231 (serine 231) interacts with Mg(2+). Threonine 246, isoleucine 248, and threonine 251 together coordinate K(+). Threonine 252 contacts Mg(2+). Lysine 455 is a (6S)-5-formyl-5,6,7,8-tetrahydrofolate binding site.

This sequence belongs to the TRAFAC class TrmE-Era-EngA-EngB-Septin-like GTPase superfamily. TrmE GTPase family. As to quaternary structure, homodimer. Heterotetramer of two MnmE and two MnmG subunits. The cofactor is K(+).

It is found in the cytoplasm. Its function is as follows. Exhibits a very high intrinsic GTPase hydrolysis rate. Involved in the addition of a carboxymethylaminomethyl (cmnm) group at the wobble position (U34) of certain tRNAs, forming tRNA-cmnm(5)s(2)U34. The polypeptide is tRNA modification GTPase MnmE (Psychromonas ingrahamii (strain DSM 17664 / CCUG 51855 / 37)).